We begin with the raw amino-acid sequence, 139 residues long: Transcription antitermination protein NusB (139 aa).

It belongs to the NusB family.

Its function is as follows. Involved in transcription antitermination. Required for transcription of ribosomal RNA (rRNA) genes. Binds specifically to the boxA antiterminator sequence of the ribosomal RNA (rrn) operons. The protein is Transcription antitermination protein NusB of Idiomarina loihiensis (strain ATCC BAA-735 / DSM 15497 / L2-TR).